A 413-amino-acid polypeptide reads, in one-letter code: MSDFIFTSESVTEGHPDKICDQISDAVLDALLKEDPESRVACETVVNTGLCLLTGEITSRAKLDYIKLVRKVIKEIGYEGAKAGGFDSNSCAVLVALDEQSPDISQGVNEADDLNEDLENNTGAGDQGIMFGYACDETPELMPLPISLAHRLARQLAKVRHENVLEYLLPDGKTQVSIDYKKGVPVSINTILISTQHRAEIDGIINEKEIRQKITDDLWINVVLPVTEDLEIKPSKEKTRFLVNPTGKFVVGGPQGDAGLTGRKIIVDTYGGYARHGGGAFSGKDPTKVDRSAAYAARYVAKSIVKAKLAKKAEVQLSYAIGVAKPISILVDTFGTSVISQDNLKELIENNFDLRPAAIIKEFDLRNLPKKLGGEFYRKTASYGHFGRNDLNLPWESVEVKAAQLVEASKDFL.

His15 contacts ATP. Residue Asp17 participates in Mg(2+) binding. K(+) is bound at residue Glu43. Positions 56 and 100 each coordinate L-methionine. Positions 100-110 (QSPDISQGVNE) are flexible loop. Residues 171-173 (DGK), 248-249 (KF), Asp257, 263-264 (RK), Ala280, and Lys284 each bind ATP. Asp257 is a binding site for L-methionine. L-methionine is bound at residue Lys288.

This sequence belongs to the AdoMet synthase family. As to quaternary structure, homotetramer; dimer of dimers. It depends on Mg(2+) as a cofactor. Requires K(+) as cofactor.

The protein localises to the cytoplasm. The catalysed reaction is L-methionine + ATP + H2O = S-adenosyl-L-methionine + phosphate + diphosphate. It functions in the pathway amino-acid biosynthesis; S-adenosyl-L-methionine biosynthesis; S-adenosyl-L-methionine from L-methionine: step 1/1. In terms of biological role, catalyzes the formation of S-adenosylmethionine (AdoMet) from methionine and ATP. The overall synthetic reaction is composed of two sequential steps, AdoMet formation and the subsequent tripolyphosphate hydrolysis which occurs prior to release of AdoMet from the enzyme. In Prochlorococcus marinus (strain MIT 9515), this protein is S-adenosylmethionine synthase.